A 430-amino-acid polypeptide reads, in one-letter code: MAEKPTNTSVPIPGSEDPQKENIRCLSTLGHFGFECLPTQLVNKSIQKGFSFNILCVGETGIGKTTLINTLFNTNLKETKSSHFYSKVGLTVKTYELLERNIPLRLTVVKTVGYGDQINKEASYQPVVDYLDAQFEAYLQEELKIKRSLADYHDSRIHVCLYFITPTGHSLKSLDLLTMKSIDRRVNIIPLIAKADSLSKNDLQRFKNNIMSELNSNGIQIYQFQVDDEASAQVNSSGLLPFAVVGSMEEVKVGKRMVRGRHYPWGVLQEVENENHCDFVKLRDLLLSTNMEDLKDQTHTQHYECYRSNRLQKLGFSDTGPDNRPVSFQEMYEAKRREFHNQCQKEEEELKQTFMQRVKEKELTFKDAEKELQDKFEHLKRIQQEEILKLEEERRKLEEQIIDFYKMKAASESAQAQVCTNIKKDKDRKK.

One can recognise a Septin-type G domain in the interval 48–313 (KGFSFNILCV…ECYRSNRLQK (266 aa)). The G1 motif stretch occupies residues 58–65 (GETGIGKT). Residues 58 to 65 (GETGIGKT), Gly-113, 194 to 202 (KADSLSKND), Gly-246, and Arg-261 contribute to the GTP site. Residues 110–113 (KTVG) are G3 motif. The interval 193–196 (AKAD) is G4 motif. The stretch at 329–410 (QEMYEAKRRE…IIDFYKMKAA (82 aa)) forms a coiled coil. The segment at 367-430 (DAEKELQDKF…NIKKDKDRKK (64 aa)) is required for interaction with SEPTIN4. Required for migration of cortical neurons during corticogenesis.

It belongs to the TRAFAC class TrmE-Era-EngA-EngB-Septin-like GTPase superfamily. Septin GTPase family. In terms of assembly, septins polymerize into heterooligomeric protein complexes that form filaments, and can associate with cellular membranes, actin filaments and microtubules. GTPase activity is required for filament formation. Interacts with ACTN4. Interacts with SEPTIN9. Interacts (via C-terminus) with SEPTIN4. As to expression, expressed in the testis and brain including the cerebrum, hippocampus and cerebellum (at protein level).

The protein resides in the cytoplasm. It is found in the cytoskeleton. The protein localises to the cell projection. Its subcellular location is the axon. It localises to the dendrite. The protein resides in the perikaryon. It is found in the perinuclear region. The protein localises to the cytoplasmic vesicle. Its subcellular location is the secretory vesicle. It localises to the acrosome. Its function is as follows. Filament-forming cytoskeletal GTPase. Involved in the migration of cortical neurons and the formation of neuron leading processes during embryonic development. Plays a role in sperm head formation during spermiogenesis, potentially via facilitating localization of ACTN4 to cell filaments. The sequence is that of Septin-14 from Mus musculus (Mouse).